A 159-amino-acid chain; its full sequence is Fimbrial protein EcpB (159 aa).

Positions 1–6 (MYKQKG) are cleaved as a propeptide — leader sequence. Phenylalanine 7 bears the N-methylphenylalanine mark. The helical transmembrane segment at 7–29 (FTLIELMIVIAIIGILAAIALPL) threads the bilayer. Residues cysteine 137 and cysteine 156 are joined by a disulfide bond.

The protein belongs to the N-Me-Phe pilin family.

It is found in the fimbrium. The protein localises to the membrane. This chain is Fimbrial protein EcpB (ecpB), found in Eikenella corrodens.